A 68-amino-acid chain; its full sequence is DNA-directed RNA polymerase subunit omega (68 aa).

Belongs to the RNA polymerase subunit omega family. In terms of assembly, the RNAP catalytic core consists of 2 alpha, 1 beta, 1 beta' and 1 omega subunit. When a sigma factor is associated with the core the holoenzyme is formed, which can initiate transcription.

It catalyses the reaction RNA(n) + a ribonucleoside 5'-triphosphate = RNA(n+1) + diphosphate. Its function is as follows. Promotes RNA polymerase assembly. Latches the N- and C-terminal regions of the beta' subunit thereby facilitating its interaction with the beta and alpha subunits. This Chromobacterium violaceum (strain ATCC 12472 / DSM 30191 / JCM 1249 / CCUG 213 / NBRC 12614 / NCIMB 9131 / NCTC 9757 / MK) protein is DNA-directed RNA polymerase subunit omega.